An 81-amino-acid chain; its full sequence is Photosystem I iron-sulfur center (81 aa).

2 4Fe-4S ferredoxin-type domains span residues 2–31 (SHAVKIYDTCIGCTQCVRACPLDVLEMVPW) and 39–68 (IAASPRTEDCVGCKRCETACPTHFLSIRVY). 8 residues coordinate [4Fe-4S] cluster: cysteine 11, cysteine 14, cysteine 17, cysteine 21, cysteine 48, cysteine 51, cysteine 54, and cysteine 58.

As to quaternary structure, the cyanobacterial PSI reaction center is composed of one copy each of PsaA,B,C,D,E,F,I,J,K,L,M and X, and forms trimeric complexes. Requires [4Fe-4S] cluster as cofactor.

It localises to the cellular thylakoid membrane. It carries out the reaction reduced [plastocyanin] + hnu + oxidized [2Fe-2S]-[ferredoxin] = oxidized [plastocyanin] + reduced [2Fe-2S]-[ferredoxin]. In terms of biological role, apoprotein for the two 4Fe-4S centers FA and FB of photosystem I (PSI); essential for photochemical activity. FB is the terminal electron acceptor of PSI, donating electrons to ferredoxin. The C-terminus interacts with PsaA/B/D and helps assemble the protein into the PSI complex. Required for binding of PsaD and PsaE to PSI. PSI is a plastocyanin/cytochrome c6-ferredoxin oxidoreductase, converting photonic excitation into a charge separation, which transfers an electron from the donor P700 chlorophyll pair to the spectroscopically characterized acceptors A0, A1, FX, FA and FB in turn. This chain is Photosystem I iron-sulfur center, found in Prochlorococcus marinus (strain MIT 9313).